Consider the following 406-residue polypeptide: uncharacterized protein (406 aa).

Polar residues predominate over residues 136–153; the sequence is SQKNWGSEKNWNSPSQGP. Residues 136–157 are disordered; that stretch reads SQKNWGSEKNWNSPSQGPASRE.

This is an uncharacterized protein from Rattus norvegicus (Rat).